A 427-amino-acid polypeptide reads, in one-letter code: Endothelin-1 receptor (427 aa).

The signal sequence occupies residues 1–20 (METFWLRVSFWVALVGGVIS). Topologically, residues 21-80 (DNPESYSTNLSIHVDSVTTFRGTELSFVVTTHQPTNLALPSNGSMHNYCPQQTKITSAFK) are extracellular. Residues Asn29 and Asn62 are each glycosylated (N-linked (GlcNAc...) asparagine). The chain crosses the membrane as a helical span at residues 81-102 (YINTVISCTIFIVGMVGNATLL). Over 103–112 (RIIYQNKCMR) the chain is Cytoplasmic. Residues 113–132 (NGPNALIASLALGDLIYVVI) traverse the membrane as a helical segment. At 133–159 (DLPINVFKLLAGRWPFEQNDFGVFLCK) the chain is on the extracellular side. The cysteines at positions 158 and 239 are disulfide-linked. A helical membrane pass occupies residues 160–181 (LFPFLQKSSVGITVLNLCALSV). Topologically, residues 182-205 (DRYRAVASWSRVQGIGIPLVTAIE) are cytoplasmic. A helical transmembrane segment spans residues 206–229 (IVSIWILSFILAIPEAIGFVMVPF). The Extracellular portion of the chain corresponds to 230–256 (EYKGAQHRTCMLNATSKFMEFYQDVKD). Residues 257–278 (WWLFGFYFCMPLVCTAIFYTLM) traverse the membrane as a helical segment. The Cytoplasmic portion of the chain corresponds to 279-306 (TCEMLNRRNGSLRIALSEHLKQRREVAK). The chain crosses the membrane as a helical span at residues 307 to 328 (TVFCLVVIFALCWFPLHLSRIL). The Extracellular segment spans residues 329–347 (KKTVYDEMDTNRCELLSFL). The helical transmembrane segment at 348–372 (LLMDYIGINLATMNSCINPIALYFV) threads the bilayer. Topologically, residues 373–427 (SKKFKNCFQSCLCCCCYQSKSLMTSVPMNGTSIQWKNPEQNNHNTERSSHKDSIN) are cytoplasmic. Residues 405-415 (IQWKNPEQNNH) show a composition bias toward polar residues. Positions 405 to 427 (IQWKNPEQNNHNTERSSHKDSIN) are disordered. Basic and acidic residues predominate over residues 416–427 (NTERSSHKDSIN). The residue at position 425 (Ser425) is a Phosphoserine.

It belongs to the G-protein coupled receptor 1 family. Endothelin receptor subfamily. EDNRA sub-subfamily. In terms of assembly, interacts with HDAC7 and KAT5.

It is found in the cell membrane. In terms of biological role, receptor for endothelin-1. Mediates its action by association with G proteins that activate a phosphatidylinositol-calcium second messenger system. The rank order of binding affinities for ET-A is: ET1 &gt; ET2 &gt;&gt; ET3. The sequence is that of Endothelin-1 receptor from Ovis aries (Sheep).